Consider the following 305-residue polypeptide: Serine/threonine-protein phosphatase 6 catalytic subunit (305 aa).

At Met1 the chain carries N-acetylmethionine. Residues Asp53, His55, Asp81, and Asn113 each contribute to the Mn(2+) site. The active-site Proton donor is the His114. Mn(2+) contacts are provided by His163 and His237.

This sequence belongs to the PPP phosphatase family. PP-6 (PP-V) subfamily. In terms of assembly, protein phosphatase 6 (PP6) holoenzyme is proposed to be a heterotrimeric complex formed by the catalytic subunit, a SAPS domain-containing subunit (PP6R) and an ankyrin repeat-domain containing regulatory subunit (ARS). Interacts with subunits PPP6R1, PPP6R2 and PPP6R3. Interacts with subunit ANKRD28. Interacts with IGBP1. Interacts with MAP3K7. Interacts with NFKBIE. Interacts with TRIM14 and WRNIP1; these interactions positively regulate the RIG-I signaling pathway. Requires Mn(2+) as cofactor. In terms of tissue distribution, ubiquitously expressed in all tissues tested with strongest expression in lung, spleen, liver, kidney and brain. Weaker expression observed in bladder, pancreas, heart and skeletal muscle.

It localises to the mitochondrion. It is found in the cytoplasm. It catalyses the reaction O-phospho-L-seryl-[protein] + H2O = L-seryl-[protein] + phosphate. It carries out the reaction O-phospho-L-threonyl-[protein] + H2O = L-threonyl-[protein] + phosphate. Catalytic subunit of protein phosphatase 6 (PP6). PP6 is a component of a signaling pathway regulating cell cycle progression in response to IL2 receptor stimulation. N-terminal domain restricts G1 to S phase progression in cancer cells, in part through control of cyclin D13 During mitosis, regulates spindle positioning. Down-regulates MAP3K7 kinase activation of the IL1 signaling pathway by dephosphorylation of MAP3K7. Acts as a regulator of innate immunity by mediating dephosphorylation CGAS, STING1 and RIGI. Also participates in the innate immune defense against viruses by desphosphorylating RIGI, an essential step that triggers RIGI-mediated signaling activation. Also regulates innate immunity by acting as a negative regulator of the cGAS-STING pathway: mediates dephosphorylation and inactivation of CGAS and STING1. CGAS dephosphorylation at 'Ser-420' impairs its ability to bind GTP, thereby inactivating it. The polypeptide is Serine/threonine-protein phosphatase 6 catalytic subunit (Mus musculus (Mouse)).